A 343-amino-acid polypeptide reads, in one-letter code: Glucokinase (343 aa).

Position 18 to 23 (18 to 23) interacts with ATP; that stretch reads GDIGGT.

It belongs to the bacterial glucokinase family.

The protein localises to the cytoplasm. It carries out the reaction D-glucose + ATP = D-glucose 6-phosphate + ADP + H(+). This is Glucokinase from Brucella abortus (strain 2308).